Reading from the N-terminus, the 180-residue chain is UPF0227 protein ECA1814 (180 aa).

The protein belongs to the UPF0227 family.

The protein is UPF0227 protein ECA1814 of Pectobacterium atrosepticum (strain SCRI 1043 / ATCC BAA-672) (Erwinia carotovora subsp. atroseptica).